Reading from the N-terminus, the 558-residue chain is D-xylose-proton symporter-like 3, chloroplastic (558 aa).

The N-terminal 31 residues, 1–31 (MAFAVSVQSHFAIRALKRDHFKNPSPRTFCS), are a transit peptide targeting the chloroplast. Transmembrane regions (helical) follow at residues 98-118 (VILPFIFPALGGLLFGYDIGA), 146-166 (LVVSGSLYGALLGSISVYGVA), 175-195 (LIIAAVLYLLGSLITGCAPDL), 197-217 (ILLVGRLLYGFGIGLAMHGAP), 238-258 (LFIVLGILLGFSVGSFQIDVV), 264-284 (MYGFGTPVALLMGLGMWSLPA), 359-379 (ALTIGGGLVLFQQITGQPSVL), 400-420 (VSVIIGVFKLLMTWVAVAKVD), 426-446 (PLLIGGVSGIALSLFLLSAYY), 449-469 (LGGFPLVAVGALLLYVGCYQI), 491-511 (GISLAVLTNFGSNAIVTFAFS), and 522-542 (LFLLFGGIALVSLLFVILVVP).

It belongs to the major facilitator superfamily. Sugar transporter (TC 2.A.1.1) family.

It localises to the plastid. It is found in the chloroplast membrane. The protein is D-xylose-proton symporter-like 3, chloroplastic of Arabidopsis thaliana (Mouse-ear cress).